Here is a 161-residue protein sequence, read N- to C-terminus: 2-C-methyl-D-erythritol 2,4-cyclodiphosphate synthase (161 aa).

Residues Asp11 and His13 each contribute to the a divalent metal cation site. 4-CDP-2-C-methyl-D-erythritol 2-phosphate contacts are provided by residues 11–13 (DIH) and 37–38 (HS). His45 lines the a divalent metal cation pocket. Residues 59–61 (DIG), 135–138 (TTNE), and Arg145 contribute to the 4-CDP-2-C-methyl-D-erythritol 2-phosphate site.

Belongs to the IspF family. Homotrimer. A divalent metal cation serves as cofactor.

The catalysed reaction is 4-CDP-2-C-methyl-D-erythritol 2-phosphate = 2-C-methyl-D-erythritol 2,4-cyclic diphosphate + CMP. The protein operates within isoprenoid biosynthesis; isopentenyl diphosphate biosynthesis via DXP pathway; isopentenyl diphosphate from 1-deoxy-D-xylulose 5-phosphate: step 4/6. In terms of biological role, involved in the biosynthesis of isopentenyl diphosphate (IPP) and dimethylallyl diphosphate (DMAPP), two major building blocks of isoprenoid compounds. Catalyzes the conversion of 4-diphosphocytidyl-2-C-methyl-D-erythritol 2-phosphate (CDP-ME2P) to 2-C-methyl-D-erythritol 2,4-cyclodiphosphate (ME-CPP) with a corresponding release of cytidine 5-monophosphate (CMP). The protein is 2-C-methyl-D-erythritol 2,4-cyclodiphosphate synthase of Thermosynechococcus vestitus (strain NIES-2133 / IAM M-273 / BP-1).